A 400-amino-acid polypeptide reads, in one-letter code: 3-phenylpropionate/cinnamic acid dioxygenase ferredoxin--NAD(+) reductase component (400 aa).

Residue 5-36 participates in FAD binding; the sequence is TIIIVGGGQAAAMAAASLRQQGFTGELHLFSD. NAD(+) is bound at residue 146 to 174; sequence SVVIIGAGTIGLELAASATQRRCKVTVIE.

It belongs to the bacterial ring-hydroxylating dioxygenase ferredoxin reductase family. As to quaternary structure, this dioxygenase system consists of four proteins: the two subunits of the hydroxylase component (HcaE and HcaF), a ferredoxin (HcaC) and a ferredoxin reductase (HcaD). Requires FAD as cofactor.

It catalyses the reaction 2 reduced [2Fe-2S]-[ferredoxin] + NAD(+) + H(+) = 2 oxidized [2Fe-2S]-[ferredoxin] + NADH. It functions in the pathway aromatic compound metabolism; 3-phenylpropanoate degradation. Its function is as follows. Part of the multicomponent 3-phenylpropionate dioxygenase, that converts 3-phenylpropionic acid (PP) and cinnamic acid (CI) into 3-phenylpropionate-dihydrodiol (PP-dihydrodiol) and cinnamic acid-dihydrodiol (CI-dihydrodiol), respectively. The chain is 3-phenylpropionate/cinnamic acid dioxygenase ferredoxin--NAD(+) reductase component from Escherichia coli (strain K12 / MC4100 / BW2952).